The sequence spans 394 residues: Lipoyl synthase, chloroplastic (394 aa).

The transit peptide at 1–36 (MMHHCSITKPTFSISISTQKLHHHSSKFLNLGFRIR) directs the protein to the chloroplast. Cys-127, Cys-132, Cys-138, Cys-158, Cys-162, Cys-165, and Ser-373 together coordinate [4Fe-4S] cluster. The region spanning 141-362 (GGGDGVATAT…KTYGESIGFR (222 aa)) is the Radical SAM core domain.

Belongs to the radical SAM superfamily. Lipoyl synthase family. It depends on [4Fe-4S] cluster as a cofactor. As to expression, expressed in roots, leaves and flowers.

It localises to the plastid. Its subcellular location is the chloroplast. The catalysed reaction is [[Fe-S] cluster scaffold protein carrying a second [4Fe-4S](2+) cluster] + N(6)-octanoyl-L-lysyl-[protein] + 2 oxidized [2Fe-2S]-[ferredoxin] + 2 S-adenosyl-L-methionine + 4 H(+) = [[Fe-S] cluster scaffold protein] + N(6)-[(R)-dihydrolipoyl]-L-lysyl-[protein] + 4 Fe(3+) + 2 hydrogen sulfide + 2 5'-deoxyadenosine + 2 L-methionine + 2 reduced [2Fe-2S]-[ferredoxin]. The protein operates within protein modification; protein lipoylation via endogenous pathway; protein N(6)-(lipoyl)lysine from octanoyl-[acyl-carrier-protein]: step 2/2. Catalyzes the radical-mediated insertion of two sulfur atoms into the C-6 and C-8 positions of the octanoyl moiety bound to the lipoyl domains of lipoate-dependent enzymes, thereby converting the octanoylated domains into lipoylated derivatives. Together with LIP2P and LIP2P2 is essential for de novo plastidial protein lipoylation during seed development. The protein is Lipoyl synthase, chloroplastic of Arabidopsis thaliana (Mouse-ear cress).